The following is a 577-amino-acid chain: MPFRLLIPLGLVCVLLPLHHGAPGPDGTAPDPAHYRERVKAMFYHAYDSYLENAFPYDELRPLTCDGHDTWGSFSLTLIDALDTLLILGNTSEFQRVVEVLQDNVDFDIDVNASVFETNIRVVGGLLSAHLLSKKAGVEVEAGWPCSGPLLRMAEEAARKLLPAFQTPTGMPYGTVNLLHGVNPGETPVTCTAGIGTFIVEFATLSSLTGDPVFEDVARVALMRLWESRSDIGLVGNHIDVLTGKWVAQDAGIGAGVDSYFEYLVKGAILLQDKKLMAMFLEYNKAIRNYTHFDDWYLWVQMYKGTVSMPVFQSLEAYWPGLQSLIGDIDNAMRTFLNYYTVWKQFGGLPEFYNIPQGYTVEKREGYPLRPELIESAMYLYRATGDPTLLELGRDAVESIEKISKVECGFATIKDLRDHKLDNRMESFFLAETVKYLYLLFHPNNFIHNNGSTFDSVMTPHGECILGAGGYIFNTEAHPIDPAALHCCRRLKEEQWEVEDLIKEFYSLKQSRPKRAQRKTVRSGPWEPQSGPATLSSPANQPREKQPAQQRTPLLSCPSQPFTSKLALLGQVFLDSS.

A signal peptide spans 1-21 (MPFRLLIPLGLVCVLLPLHHG). 4 N-linked (GlcNAc...) asparagine glycosylation sites follow: asparagine 90, asparagine 112, asparagine 289, and asparagine 450. Residues 513–561 (PKRAQRKTVRSGPWEPQSGPATLSSPANQPREKQPAQQRTPLLSCPSQP) are disordered. Composition is skewed to polar residues over residues 531–540 (GPATLSSPAN) and 547–561 (PAQQ…PSQP).

Belongs to the glycosyl hydrolase 47 family. N-glycosylated.

The protein localises to the endoplasmic reticulum lumen. Its function is as follows. Involved in the endoplasmic reticulum-associated degradation (ERAD) pathway that targets misfolded glycoproteins for degradation in an N-glycan-dependent manner. May initiate ERAD by promoting the first mannose trimming step of ERAD substrates, from Man9GlcNAc2 to Man8GlcNAc2. Seems to recognize and bind to exposed hydrophobic regions in target proteins. This Mus musculus (Mouse) protein is ER degradation-enhancing alpha-mannosidase-like protein 2.